Consider the following 465-residue polypeptide: Cysteine--tRNA ligase (465 aa).

Residue Cys-27 participates in Zn(2+) binding. The short motif at 29 to 39 (PTVYDDAHLGH) is the 'HIGH' region element. A disordered region spans residues 153-173 (DISHKVSDDDTQSRVEHNSEK). Cys-208, His-237, and Glu-241 together coordinate Zn(2+). The short motif at 269–273 (KMSKS) is the 'KMSKS' region element. Lys-272 contributes to the ATP binding site.

The protein belongs to the class-I aminoacyl-tRNA synthetase family. As to quaternary structure, monomer. Zn(2+) serves as cofactor.

Its subcellular location is the cytoplasm. The enzyme catalyses tRNA(Cys) + L-cysteine + ATP = L-cysteinyl-tRNA(Cys) + AMP + diphosphate. In Sulfurovum sp. (strain NBC37-1), this protein is Cysteine--tRNA ligase.